The sequence spans 152 residues: Ribosome maturation factor RimP (152 aa).

The protein belongs to the RimP family.

It is found in the cytoplasm. Functionally, required for maturation of 30S ribosomal subunits. This Burkholderia vietnamiensis (strain G4 / LMG 22486) (Burkholderia cepacia (strain R1808)) protein is Ribosome maturation factor RimP.